Here is a 177-residue protein sequence, read N- to C-terminus: Interleukin-10 (177 aa).

The N-terminal stretch at Met-1–Ala-19 is a signal peptide. Cystine bridges form between Cys-31-Cys-127 and Cys-81-Cys-133. Asn-135 carries N-linked (GlcNAc...) asparagine glycosylation.

The protein belongs to the IL-10 family. Homodimer. Interacts with IL10RA and IL10RB.

It localises to the secreted. Major immune regulatory cytokine that acts on many cells of the immune system where it has profound anti-inflammatory functions, limiting excessive tissue disruption caused by inflammation. Mechanistically, IL10 binds to its heterotetrameric receptor comprising IL10RA and IL10RB leading to JAK1 and STAT2-mediated phosphorylation of STAT3. In turn, STAT3 translocates to the nucleus where it drives expression of anti-inflammatory mediators. Targets antigen-presenting cells (APCs) such as macrophages and monocytes and inhibits their release of pro-inflammatory cytokines including granulocyte-macrophage colony-stimulating factor /GM-CSF, granulocyte colony-stimulating factor/G-CSF, IL-1 alpha, IL-1 beta, IL-6, IL-8 and TNF-alpha. Also interferes with antigen presentation by reducing the expression of MHC-class II and co-stimulatory molecules, thereby inhibiting their ability to induce T cell activation. In addition, controls the inflammatory response of macrophages by reprogramming essential metabolic pathways including mTOR signaling. This chain is Interleukin-10 (IL10), found in Ovis aries (Sheep).